A 367-amino-acid polypeptide reads, in one-letter code: Carbamoyl phosphate synthase small chain (367 aa).

Residues Met-1–Met-182 form a CPSase region. L-glutamine is bound by residues Ser-50, Gly-230, and Gly-232. The Glutamine amidotransferase type-1 domain occupies Met-182–Lys-367. Catalysis depends on Cys-258, which acts as the Nucleophile. L-glutamine contacts are provided by Leu-259, Gln-262, Asn-300, Gly-302, and Tyr-303. Catalysis depends on residues His-343 and Glu-345.

The protein belongs to the CarA family. Composed of two chains; the small (or glutamine) chain promotes the hydrolysis of glutamine to ammonia, which is used by the large (or ammonia) chain to synthesize carbamoyl phosphate. Tetramer of heterodimers (alpha,beta)4.

The enzyme catalyses hydrogencarbonate + L-glutamine + 2 ATP + H2O = carbamoyl phosphate + L-glutamate + 2 ADP + phosphate + 2 H(+). It catalyses the reaction L-glutamine + H2O = L-glutamate + NH4(+). Its pathway is amino-acid biosynthesis; L-arginine biosynthesis; carbamoyl phosphate from bicarbonate: step 1/1. It functions in the pathway pyrimidine metabolism; UMP biosynthesis via de novo pathway; (S)-dihydroorotate from bicarbonate: step 1/3. Small subunit of the glutamine-dependent carbamoyl phosphate synthetase (CPSase). CPSase catalyzes the formation of carbamoyl phosphate from the ammonia moiety of glutamine, carbonate, and phosphate donated by ATP, constituting the first step of 2 biosynthetic pathways, one leading to arginine and/or urea and the other to pyrimidine nucleotides. The small subunit (glutamine amidotransferase) binds and cleaves glutamine to supply the large subunit with the substrate ammonia. This Saccharolobus solfataricus (strain ATCC 35092 / DSM 1617 / JCM 11322 / P2) (Sulfolobus solfataricus) protein is Carbamoyl phosphate synthase small chain.